A 177-amino-acid chain; its full sequence is ATP synthase subunit delta (177 aa).

The protein belongs to the ATPase delta chain family. F-type ATPases have 2 components, F(1) - the catalytic core - and F(0) - the membrane proton channel. F(1) has five subunits: alpha(3), beta(3), gamma(1), delta(1), epsilon(1). F(0) has three main subunits: a(1), b(2) and c(10-14). The alpha and beta chains form an alternating ring which encloses part of the gamma chain. F(1) is attached to F(0) by a central stalk formed by the gamma and epsilon chains, while a peripheral stalk is formed by the delta and b chains.

It localises to the cell inner membrane. F(1)F(0) ATP synthase produces ATP from ADP in the presence of a proton or sodium gradient. F-type ATPases consist of two structural domains, F(1) containing the extramembraneous catalytic core and F(0) containing the membrane proton channel, linked together by a central stalk and a peripheral stalk. During catalysis, ATP synthesis in the catalytic domain of F(1) is coupled via a rotary mechanism of the central stalk subunits to proton translocation. In terms of biological role, this protein is part of the stalk that links CF(0) to CF(1). It either transmits conformational changes from CF(0) to CF(1) or is implicated in proton conduction. This is ATP synthase subunit delta from Serratia proteamaculans (strain 568).